The primary structure comprises 81 residues: High-potential iron-sulfur protein (81 aa).

[4Fe-4S] cluster is bound by residues Cys-43, Cys-46, Cys-59, and Cys-73.

This sequence belongs to the high-potential iron-sulfur protein (HiPIP) family. In terms of assembly, homodimer.

Its function is as follows. Specific class of high-redox-potential 4Fe-4S ferredoxins. Functions in anaerobic electron transport in most purple and in some other photosynthetic bacteria and in at least one genus (Paracoccus) of halophilic, denitrifying bacteria. In Thiococcus pfennigii (Thiocapsa pfennigii), this protein is High-potential iron-sulfur protein (hip).